The chain runs to 1290 residues: Alpha-factor-transporting ATPase (1290 aa).

The Cytoplasmic segment spans residues 1-25 (MNFLSFKTTKHYHIFRYVNIRNDYR). The helical transmembrane segment at 26–46 (LLMIMIIGTVATGLVPAITSI) threads the bilayer. One can recognise an ABC transmembrane type-1 1 domain in the interval 27–319 (LMIMIIGTVA…TLHQIVVLQK (293 aa)). Over 47-75 (LTGRVFDLLSVFVANGSHQGLYSQLVQRS) the chain is Extracellular. Residue Asn61 is glycosylated (N-linked (GlcNAc...) asparagine). Residues 76–96 (MAVMALGAASVPVMWLSLTSW) form a helical membrane-spanning segment. Residues 97–150 (MHIGERQGFRIRSQILEAYLEEKPMEWYDNNEKLLGDFTQINRCVEELRSSSAE) are Cytoplasmic-facing. The helical transmembrane segment at 151 to 171 (ASAITFQNLVAICALLGTSFY) threads the bilayer. The Extracellular segment spans residues 172–173 (YS). Residues 174–194 (WSLTLIILCSSPIITFFAVVF) traverse the membrane as a helical segment. Residues 195–262 (SRMIHVYSEK…SCFFVAANAG (68 aa)) are Cytoplasmic-facing. Residues 263–283 (ILRFLTLTMFVQGFWFGSAMI) traverse the membrane as a helical segment. Residues 284 to 296 (KKGKLNINDVITC) are Extracellular-facing. The helical transmembrane segment at 297–317 (FHSCIMLGSTLNNTLHQIVVL) threads the bilayer. The Cytoplasmic portion of the chain corresponds to 318–715 (QKGGVAMEKI…RMIKSIRYKK (398 aa)). The region spanning 357–603 (LTFANVSFSY…PTTTFSTWYH (247 aa)) is the ABC transporter 1 domain. ATP is bound at residue 392 to 399 (GKSGSGKS). A helical transmembrane segment spans residues 716-736 (ILILGLLCSLIAGATNPVFSY). One can recognise an ABC transmembrane type-1 2 domain in the interval 717–1007 (LILGLLCSLI…LVSQIPDISR (291 aa)). The Extracellular segment spans residues 737 to 763 (TFSFLLEGIVPSTDGKTGSSHYLAKWS). The helical transmembrane segment at 764-784 (LLVLGVAAADGIFNFAKGFLL) threads the bilayer. Topologically, residues 785-838 (DCCSEYWVMDLRNEVMEKLTRKNMDWFSGENNKASEISALVLNDLRDLRSLVSE) are cytoplasmic. A helical transmembrane segment spans residues 839–859 (FLSAMTSFVTVSTIGLIWALV). The Extracellular segment spans residues 860–865 (SGWKLS). Residues 866–886 (LVCISMFPLIIIFSAIYGGIL) form a helical membrane-spanning segment. The Cytoplasmic portion of the chain corresponds to 887 to 945 (QKCETDYKTSVAQLENCLYQIVTNIKTIKCLQAEFHFQLTYHDLKIKMQQIASKRAIAT). Residues 946–966 (GFGISMTNMIVMCIQAIIYYY) traverse the membrane as a helical segment. The Extracellular portion of the chain corresponds to 967–981 (GLKLVMIHEYTSKEM). The chain crosses the membrane as a helical span at residues 982-1002 (FTTFTLLLFTIMSCTSLVSQI). Residues 1003 to 1290 (PDISRGQRAA…LFQIVSNQSS (288 aa)) lie on the Cytoplasmic side of the membrane. Lys1022 participates in a covalent cross-link: Glycyl lysine isopeptide (Lys-Gly) (interchain with G-Cter in ubiquitin). Residues 1052–1287 (VSIQNLTFAY…RGELFQIVSN (236 aa)) enclose the ABC transporter 2 domain. Residue 1087 to 1094 (GESGTGKS) coordinates ATP.

The protein belongs to the ABC transporter superfamily. Alpha-factor sex pheromone exporter (TC 3.A.1.206) family. In terms of processing, degraded via the ubiquitin system.

The protein localises to the membrane. It carries out the reaction an [alpha-factor](in) + ATP + H2O = an [alpha-factor](out) + ADP + phosphate + H(+). Functionally, STE6 is required in yeast MATA cells for production of A-factor pheromone. STE6 is involved in the transport of the farnesyl-derivation of the A-factor pheromone. The chain is Alpha-factor-transporting ATPase (STE6) from Saccharomyces cerevisiae (strain ATCC 204508 / S288c) (Baker's yeast).